The sequence spans 390 residues: Serpin B3 (390 aa).

M1 bears the N-acetylmethionine mark.

It belongs to the serpin family. Ov-serpin subfamily. As to quaternary structure, interacts with MAPK8/JNK1. As to expression, squamous cells. Expressed in some hepatocellular carcinoma (at protein level).

It is found in the cytoplasm. Functionally, may act as a papain-like cysteine protease inhibitor to modulate the host immune response against tumor cells. Also functions as an inhibitor of UV-induced apoptosis via suppression of the activity of c-Jun NH(2)-terminal kinase (JNK1). The polypeptide is Serpin B3 (SERPINB3) (Homo sapiens (Human)).